We begin with the raw amino-acid sequence, 536 residues long: 2,3-bisphosphoglycerate-independent phosphoglycerate mutase (536 aa).

Mn(2+)-binding residues include D19 and S69. S69 functions as the Phosphoserine intermediate in the catalytic mechanism. Residues H130, 160 to 161, R192, R198, 262 to 265, and K335 each bind substrate; these read RD and RPDR. Mn(2+)-binding residues include D402, H406, D443, H444, and H461.

Belongs to the BPG-independent phosphoglycerate mutase family. As to quaternary structure, monomer. It depends on Mn(2+) as a cofactor.

The catalysed reaction is (2R)-2-phosphoglycerate = (2R)-3-phosphoglycerate. It participates in carbohydrate degradation; glycolysis; pyruvate from D-glyceraldehyde 3-phosphate: step 3/5. Functionally, catalyzes the interconversion of 2-phosphoglycerate and 3-phosphoglycerate. The protein is 2,3-bisphosphoglycerate-independent phosphoglycerate mutase of Gloeobacter violaceus (strain ATCC 29082 / PCC 7421).